The following is a 306-amino-acid chain: Protoheme IX farnesyltransferase (306 aa).

9 helical membrane-spanning segments follow: residues 35–55 (LIVF…PTWL), 61–81 (LIAC…NCLV), 106–126 (LTLA…YVWV), 129–149 (LTMW…TVIL), 157–177 (IVIG…AMTG), 183–203 (ALIL…ALAL), 224–244 (EFTR…CLMP), 245–265 (FIFK…SIGF), and 286–306 (RFSL…HYLI).

Belongs to the UbiA prenyltransferase family. Protoheme IX farnesyltransferase subfamily.

Its subcellular location is the cell inner membrane. The enzyme catalyses heme b + (2E,6E)-farnesyl diphosphate + H2O = Fe(II)-heme o + diphosphate. It functions in the pathway porphyrin-containing compound metabolism; heme O biosynthesis; heme O from protoheme: step 1/1. Converts heme B (protoheme IX) to heme O by substitution of the vinyl group on carbon 2 of heme B porphyrin ring with a hydroxyethyl farnesyl side group. The sequence is that of Protoheme IX farnesyltransferase from Polaromonas naphthalenivorans (strain CJ2).